We begin with the raw amino-acid sequence, 332 residues long: Probable farnesyl diphosphate synthase (332 aa).

Isopentenyl diphosphate-binding residues include K75, R78, and H107. D114 and D120 together coordinate Mg(2+). A (2E)-geranyl diphosphate-binding site is contributed by R125. R126 is an isopentenyl diphosphate binding site. Residues K208, Q250, and K267 each contribute to the (2E)-geranyl diphosphate site.

This sequence belongs to the FPP/GGPP synthase family. The cofactor is Mg(2+).

It localises to the cytoplasm. The catalysed reaction is isopentenyl diphosphate + (2E)-geranyl diphosphate = (2E,6E)-farnesyl diphosphate + diphosphate. This chain is Probable farnesyl diphosphate synthase, found in Sinorhizobium fredii (strain NBRC 101917 / NGR234).